A 705-amino-acid chain; its full sequence is Bifunctional arginine dihydrolase/ornithine cyclodeaminase ArgZ (705 aa).

Residues 10–269 (CPPDHYDVDY…GAAKCLTLRV (260 aa)) are arginine dihydrolase. The L-arginine site is built by N22, N71, R90, R139, H168, D170, A258, and C264. Positions 22, 71, 90, 139, and 168 each coordinate L-ornithine. H168 serves as the catalytic Proton donor/acceptor. Residues A258 and C264 each contribute to the L-ornithine site. C264 functions as the Nucleophile in the catalytic mechanism. The ornithine cyclodeaminase stretch occupies residues 285-695 (SRVIRMEGHL…SLLVRQLQQL (411 aa)). Residues N525, A526, D604, S636, M637, L638, H639, D657, D680, and V681 each coordinate NAD(+).

It in the N-terminal section; belongs to the DDAH family. This sequence in the C-terminal section; belongs to the AgrE/ArgZ ornithine cyclodeaminase family. As to quaternary structure, homotetramer. NAD(+) serves as cofactor.

It carries out the reaction L-arginine + 2 H2O + 2 H(+) = L-ornithine + 2 NH4(+) + CO2. The catalysed reaction is L-ornithine = L-proline + NH4(+). Arginine dihydrolase activity does not require a metal cofactor. In terms of biological role, bifunctional enzyme involved in a cyanobacterial arginine utilization pathway that enables cellular adaptation to nitrogen fluctuations. Catalyzes the hydrolysis of arginine to ornithine, with the release of ammonia and carbon dioxide. Then, probably catalyzes the conversion of ornithine to proline, with the release of ammonia. Is highly specific for arginine and cannot hydrolyze citrulline, dimethylarginine and other amino acids. In Synechocystis sp. (strain ATCC 27184 / PCC 6803 / Kazusa), this protein is Bifunctional arginine dihydrolase/ornithine cyclodeaminase ArgZ.